Reading from the N-terminus, the 286-residue chain is Pyridoxal kinase PdxY (286 aa).

Residues serine 9 and 44–45 (TQ) each bind substrate. Residues aspartate 111, alanine 143, glutamate 148, lysine 181, and 208–211 (RPLV) each bind ATP. Position 223 (aspartate 223) interacts with substrate.

Belongs to the pyridoxine kinase family. PdxY subfamily. In terms of assembly, homodimer. Mg(2+) is required as a cofactor.

It carries out the reaction pyridoxal + ATP = pyridoxal 5'-phosphate + ADP + H(+). Its pathway is cofactor metabolism; pyridoxal 5'-phosphate salvage; pyridoxal 5'-phosphate from pyridoxal: step 1/1. Its function is as follows. Pyridoxal kinase involved in the salvage pathway of pyridoxal 5'-phosphate (PLP). Catalyzes the phosphorylation of pyridoxal to PLP. This is Pyridoxal kinase PdxY from Salmonella paratyphi A (strain ATCC 9150 / SARB42).